The following is a 214-amino-acid chain: tRNA (guanine-N(7)-)-methyltransferase (214 aa).

The S-adenosyl-L-methionine site is built by glutamate 43, glutamate 68, aspartate 95, and aspartate 117. Aspartate 117 is a catalytic residue. Residues lysine 121, aspartate 153, and 191 to 194 (TEYE) contribute to the substrate site.

Belongs to the class I-like SAM-binding methyltransferase superfamily. TrmB family.

The enzyme catalyses guanosine(46) in tRNA + S-adenosyl-L-methionine = N(7)-methylguanosine(46) in tRNA + S-adenosyl-L-homocysteine. The protein operates within tRNA modification; N(7)-methylguanine-tRNA biosynthesis. In terms of biological role, catalyzes the formation of N(7)-methylguanine at position 46 (m7G46) in tRNA. This Lachnoclostridium phytofermentans (strain ATCC 700394 / DSM 18823 / ISDg) (Clostridium phytofermentans) protein is tRNA (guanine-N(7)-)-methyltransferase.